The following is a 187-amino-acid chain: Large ribosomal subunit protein uL6 (187 aa).

Belongs to the universal ribosomal protein uL6 family. In terms of assembly, part of the 50S ribosomal subunit.

In terms of biological role, this protein binds to the 23S rRNA, and is important in its secondary structure. It is located near the subunit interface in the base of the L7/L12 stalk, and near the tRNA binding site of the peptidyltransferase center. The polypeptide is Large ribosomal subunit protein uL6 (Chloroflexus aggregans (strain MD-66 / DSM 9485)).